The primary structure comprises 37 residues: Large ribosomal subunit protein bL36c (37 aa).

Belongs to the bacterial ribosomal protein bL36 family.

Its subcellular location is the plastid. The protein resides in the chloroplast. This is Large ribosomal subunit protein bL36c from Welwitschia mirabilis (Tree tumbo).